A 275-amino-acid chain; its full sequence is Protein rolling stone (275 aa).

6 helical membrane passes run 45-65 (LLYRWIWALFFLGVYIMCVIV), 72-92 (FFIYMTNWGFGLCTITMLISA), 127-147 (WLYNMTLSLALIISTVYWVFL), 162-182 (IITHGMNSVMMLIDFLVIAFP), 185-205 (ILHMVYGMSLAIFFFLFTLIY), and 232-252 (MVTFVGIFLLIMCYWVLLFGL).

Expressed in cells of the somatic mesoderm, most notably the muscle founder cells, between embryonic stages 12 and 14, in growing muscle fibers in dorsal, lateral and ventral positions. At stage 16 strongest expression is in some ventral muscles and muscle 8. At stages 16/17 expression is restricted to some cells of the CNS, the brain and the gonads.

It is found in the membrane. In terms of biological role, may have a central role in the fusion process during myogenesis, within the somatic mesoderm. The protein is Protein rolling stone (rost) of Drosophila melanogaster (Fruit fly).